The chain runs to 156 residues: Small ribosomal subunit protein uS7 (156 aa).

Belongs to the universal ribosomal protein uS7 family. Part of the 30S ribosomal subunit. Contacts proteins S9 and S11.

Its function is as follows. One of the primary rRNA binding proteins, it binds directly to 16S rRNA where it nucleates assembly of the head domain of the 30S subunit. Is located at the subunit interface close to the decoding center, probably blocks exit of the E-site tRNA. This Clostridium botulinum (strain Okra / Type B1) protein is Small ribosomal subunit protein uS7.